Here is a 224-residue protein sequence, read N- to C-terminus: Large ribosomal subunit protein bL25 (224 aa).

The protein belongs to the bacterial ribosomal protein bL25 family. CTC subfamily. As to quaternary structure, part of the 50S ribosomal subunit; part of the 5S rRNA/L5/L18/L25 subcomplex. Contacts the 5S rRNA. Binds to the 5S rRNA independently of L5 and L18.

In terms of biological role, this is one of the proteins that binds to the 5S RNA in the ribosome where it forms part of the central protuberance. The protein is Large ribosomal subunit protein bL25 of Psychrobacter arcticus (strain DSM 17307 / VKM B-2377 / 273-4).